Reading from the N-terminus, the 87-residue chain is U14-lycotoxin-Ls1a (87 aa).

The first 20 residues, 1-20 (MNSKVFAVLLLLALLTCVLS), serve as a signal peptide directing secretion. The region spanning 21-66 (EKYCPTPRNTSCKKMNIRNNCCRDSDCTSNAFCCAEPCGNFCHKAS) is the WAP domain. 5 disulfide bridges follow: C24–C54, C32–C58, C41–C53, C42–C80, and C47–C62.

Belongs to the venom protein 11 family. 01 (wap-1) subfamily. Contains 5 disulfide bonds. As to expression, expressed by the venom gland.

The protein resides in the secreted. In terms of biological role, has antibacterial activity. This Lycosa singoriensis (Wolf spider) protein is U14-lycotoxin-Ls1a.